A 290-amino-acid polypeptide reads, in one-letter code: Protease HtpX homolog (290 aa).

2 consecutive transmembrane segments (helical) span residues 4–24 (ILLFVLTNVMVVAVLGIVASL) and 39–59 (TALLGFALVMGFGGAIISLLI). Residue His-144 participates in Zn(2+) binding. Glu-145 is an active-site residue. Residue His-148 coordinates Zn(2+). 2 helical membrane-spanning segments follow: residues 159–179 (LIQGVMNTFVVFLSRVIGYAV) and 199–219 (VSTIVLDIVLGFAAAIVVAWF). A Zn(2+)-binding site is contributed by Glu-224.

Belongs to the peptidase M48B family. It depends on Zn(2+) as a cofactor.

The protein resides in the cell inner membrane. In Variovorax paradoxus (strain S110), this protein is Protease HtpX homolog.